Consider the following 247-residue polypeptide: Syntaxin-like protein fsv1 (247 aa).

The stretch at 27–94 (NPDEEIESSL…FEKQRRASSI (68 aa)) forms a coiled coil. Residues 88–130 (QRRASSIPADGTSAFSANPQVASTNNKLTPLPSLQKTTSSSEG) form a disordered region. Over residues 100 to 130 (SAFSANPQVASTNNKLTPLPSLQKTTSSSEG) the composition is skewed to polar residues. One can recognise a t-SNARE coiled-coil homology domain in the interval 159–221 (QQMLNEQEES…DHAKNRLNKV (63 aa)).

Its subcellular location is the golgi apparatus membrane. It is found in the prevacuolar compartment membrane. Functionally, involved in vesicle-mediated protein transport between the Golgi and the vacuole. This Schizosaccharomyces pombe (strain 972 / ATCC 24843) (Fission yeast) protein is Syntaxin-like protein fsv1 (fsv1).